The following is a 163-amino-acid chain: Nucleotide-binding protein NFA_51200 (163 aa).

It belongs to the YajQ family.

Nucleotide-binding protein. This Nocardia farcinica (strain IFM 10152) protein is Nucleotide-binding protein NFA_51200.